The chain runs to 1331 residues: ABC multidrug transporter MDR2 (1331 aa).

The disordered stretch occupies residues 1 to 50 (MVEPSEKPNTQNDDVSKQEIRNPVSSSSSTSDKEKVAKKGNSDATKSLTP). Basic and acidic residues predominate over residues 31–41 (SDKEKVAKKGN). The next 4 membrane-spanning stretches (helical) occupy residues 93–113 (MILL…LPLF), 147–167 (YFVY…VGFI), 219–239 (KVGL…IGYV), and 242–262 (WKLA…MGGI). Residues 97–387 (AIVSLASIAA…VAPNTQAFAS (291 aa)) enclose the ABC transmembrane type-1 1 domain. Asparagine 293 carries N-linked (GlcNAc...) asparagine glycosylation. The next 2 helical transmembrane spans lie at 325–345 (LGIM…LGFW) and 358–378 (LSAI…IGNV). In terms of domain architecture, ABC transporter 1 spans 422 to 667 (IEFRGIKHIY…KGTYLQLVEA (246 aa)). 457-464 (GPSGSGKS) contacts ATP. Asparagine 529 is a glycosylation site (N-linked (GlcNAc...) asparagine). 2 helical membrane passes run 762–782 (LCGF…SVFF) and 808–828 (LMFL…GVIF). An ABC transmembrane type-1 2 domain is found at 764–1051 (GFFFAVLSGA…VFSFSPDMGK (288 aa)). Residue asparagine 860 is glycosylated (N-linked (GlcNAc...) asparagine). Helical transmembrane passes span 884–904 (LGTI…ALAF), 910–930 (LVCI…FWIL), 995–1015 (ASQS…GGLL), and 1025–1045 (FFLC…VFSF). One can recognise an ABC transporter 2 domain in the interval 1086–1324 (IEFRDVHFRY…KGRYYELVHM (239 aa)). The N-linked (GlcNAc...) asparagine glycan is linked to asparagine 1108. An ATP-binding site is contributed by 1121 to 1128 (GPSGCGKS).

The protein belongs to the ABC transporter superfamily. ABCB family. Multidrug resistance exporter (TC 3.A.1.201) subfamily.

It localises to the cell membrane. The catalysed reaction is itraconazole(in) + ATP + H2O = itraconazole(out) + ADP + phosphate + H(+). In terms of biological role, ABC-type efflux transporter involved in the modulation susceptibility to itraconazole. The chain is ABC multidrug transporter MDR2 from Trichophyton rubrum (strain ATCC MYA-4607 / CBS 118892) (Athlete's foot fungus).